Here is a 495-residue protein sequence, read N- to C-terminus: Lysine--tRNA ligase (495 aa).

Mg(2+) is bound by residues Glu-406 and Glu-413.

It belongs to the class-II aminoacyl-tRNA synthetase family. Homodimer. The cofactor is Mg(2+).

Its subcellular location is the cytoplasm. The catalysed reaction is tRNA(Lys) + L-lysine + ATP = L-lysyl-tRNA(Lys) + AMP + diphosphate. This chain is Lysine--tRNA ligase, found in Staphylococcus aureus (strain COL).